The chain runs to 259 residues: Bidirectional sugar transporter SWEET6a (259 aa).

The Extracellular portion of the chain corresponds to 1 to 9 (MISPDAARN). Residues 10–30 (VVGIIGNVISFGLFLAPVPTF) form a helical membrane-spanning segment. Residues 10-98 (VVGIIGNVIS…IFFLYSPNKK (89 aa)) enclose the MtN3/slv 1 domain. Over 31-45 (WRICKRKDVEEFKAD) the chain is Cytoplasmic. A helical transmembrane segment spans residues 46 to 66 (PYLATLLNCMLWVFYGIPVVH). Over 67–69 (PNS) the chain is Extracellular. The helical transmembrane segment at 70–90 (ILVVTINGIGLLVEGTYLLIF) threads the bilayer. The Cytoplasmic portion of the chain corresponds to 91–103 (FLYSPNKKRLRMC). The helical transmembrane segment at 104-124 (AVLGVELVFMLAVILGVLLGA) threads the bilayer. The Extracellular segment spans residues 125–131 (HTHEKRS). Residues 132 to 152 (MIVGILCVFFGSIMYFSPLTI) form a helical membrane-spanning segment. Residues 133–216 (IVGILCVFFG…LILYACYYRT (84 aa)) enclose the MtN3/slv 2 domain. Topologically, residues 153-165 (MGKVIKTKSVEYM) are cytoplasmic. The helical transmembrane segment at 166–186 (PFFLSLVCFLNGVCWTAYALI) threads the bilayer. Residues 187–189 (RFD) are Extracellular-facing. The chain crosses the membrane as a helical span at residues 190–210 (IYVTIPNGLGALFGAIQLILY). Topologically, residues 211 to 259 (ACYYRTTPKKTKAAKDVEMPSVVVSGTGAAAAAGGGNTGGGSISVTVER) are cytoplasmic.

It belongs to the SWEET sugar transporter family. In terms of assembly, forms homooligomers and/or heterooligomers.

The protein localises to the cell membrane. In terms of biological role, mediates both low-affinity uptake and efflux of sugar across the plasma membrane. In Oryza sativa subsp. indica (Rice), this protein is Bidirectional sugar transporter SWEET6a (SWEET6A).